Reading from the N-terminus, the 596-residue chain is Transketolase-like protein 1 (596 aa).

A substrate-binding site is contributed by histidine 46. Residues serine 49 and 94–96 (GWL) contribute to the thiamine diphosphate site. Position 126 (aspartate 126) interacts with Mg(2+). Valine 127 and asparagine 156 together coordinate thiamine diphosphate. 2 residues coordinate Mg(2+): asparagine 156 and leucine 158. Residues lysine 218 and histidine 232 each coordinate thiamine diphosphate. 3 residues coordinate substrate: histidine 232, arginine 292, and serine 319. Residues glutamate 340 and phenylalanine 366 each coordinate thiamine diphosphate. Glutamate 340 functions as the Proton donor in the catalytic mechanism. Residues histidine 390 and aspartate 398 each contribute to the substrate site. Glutamine 402 provides a ligand contact to thiamine diphosphate. Arginine 448 is a binding site for substrate.

It belongs to the transketolase family. In terms of assembly, homodimer. It depends on Mg(2+) as a cofactor. Ca(2+) serves as cofactor. The cofactor is Mn(2+). Requires Co(2+) as cofactor. Thiamine diphosphate is required as a cofactor.

The protein localises to the cytoplasm. It carries out the reaction D-sedoheptulose 7-phosphate + D-glyceraldehyde 3-phosphate = aldehydo-D-ribose 5-phosphate + D-xylulose 5-phosphate. Its function is as follows. Catalyzes the transfer of a two-carbon ketol group from a ketose donor to an aldose acceptor, via a covalent intermediate with the cofactor thiamine pyrophosphate. This chain is Transketolase-like protein 1 (TKTL1), found in Bos taurus (Bovine).